The sequence spans 283 residues: UPF0276 protein Nmul_A2550 (283 aa).

Belongs to the UPF0276 family.

The sequence is that of UPF0276 protein Nmul_A2550 from Nitrosospira multiformis (strain ATCC 25196 / NCIMB 11849 / C 71).